Reading from the N-terminus, the 693-residue chain is Follicle-stimulating hormone receptor (693 aa).

Residues 1 to 18 form the signal peptide; that stretch reads MFLVFTCSLILLASCSSC. 2 cysteine pairs are disulfide-bonded: Cys-18-Cys-25 and Cys-23-Cys-32. The LRRNT domain occupies 19 to 46; it reads QHHTCHCAGRIFICQESKVVQLPRDIPT. The Extracellular portion of the chain corresponds to 19–366; the sequence is QHHTCHCAGR…EDIMGYTILR (348 aa). Asn-47 carries N-linked (GlcNAc...) asparagine glycosylation. 9 LRR repeats span residues 49–72, 73–97, 98–118, 119–143, 144–169, 170–192, 193–216, 217–240, and 241–259; these read TELRFVLTKMRVIPKGAFAGLLDL, EKIEISQNDALEVIEAKVFSNLPKL, HEIRIEKANNLVYIDQDAFQH, LPSLRYLLISNTGLRFLPVVQKVHS, FQKVLLDIQDNINIRTIERNSFMGLS, SESVILWLNKNGIQEIENHAFNG, TYLDELNLSDNQNLEKLPNEVFQG, ANGPVVLDISRTKISFLPGHGLEL, and IKKLRARSTYNLKKLPDLS. Residues Asn-191 and Asn-199 are each glycosylated (N-linked (GlcNAc...) asparagine). Asn-268 carries N-linked (GlcNAc...) asparagine glycosylation. 4 disulfides stabilise this stretch: Cys-275–Cys-346, Cys-276–Cys-292, Cys-276–Cys-356, and Cys-292–Cys-338. Residues 367–387 form a helical membrane-spanning segment; sequence VLIWFISILAITGNIVVLIIL. Residues 388–398 lie on the Cytoplasmic side of the membrane; sequence ISSQYKLTVPR. The chain crosses the membrane as a helical span at residues 399-421; that stretch reads FLMCNLAFADLCIGIYLLFIASV. The Extracellular segment spans residues 422–443; sequence DIQTKSQYYNYAIDWQTGAGCN. Cys-442 and Cys-517 are joined by a disulfide. A helical membrane pass occupies residues 444–465; sequence AAGFFTVFASELSVYTLTVITL. At 466–485 the chain is on the cytoplasmic side; it reads ERWHTITYAMQLDRKVRFRH. Residues 486 to 508 traverse the membrane as a helical segment; sequence AVIIMIFGWMFAFTVALLPIFGV. The Extracellular segment spans residues 509-528; the sequence is SSYMKVSICLPMDIETPFSQ. Residues 529–550 traverse the membrane as a helical segment; that stretch reads AYVIFLLVLNVLAFVIICACYI. Residues 551-573 are Cytoplasmic-facing; that stretch reads CIYFTVRNPNVISSNSDTKIAKR. The helical transmembrane segment at 574 to 597 threads the bilayer; that stretch reads MAILIFTDFLCMAPISFFAISASL. Residues 598 to 608 lie on the Extracellular side of the membrane; sequence KVPLITVSKSK. The helical transmembrane segment at 609 to 630 threads the bilayer; it reads ILLVLFYPINSCANPFLYAIFT. Topologically, residues 631 to 693 are cytoplasmic; sequence KTFRRDFFIL…YSLVPLNHLN (63 aa).

It belongs to the G-protein coupled receptor 1 family. FSH/LSH/TSH subfamily. In terms of assembly, homotrimer. Functions as a homotrimer binding the FSH hormone heterodimer composed of CGA and FSHB.

The protein localises to the cell membrane. G protein-coupled receptor for follitropin, the follicle-stimulating hormone. Through cAMP production activates the downstream PI3K-AKT and ERK1/ERK2 signaling pathways. This is Follicle-stimulating hormone receptor (FSHR) from Cairina moschata (Muscovy duck).